Consider the following 288-residue polypeptide: Phenazine biosynthesis-like domain-containing protein (288 aa).

Glu-46 is a catalytic residue.

The protein belongs to the PhzF family. As to quaternary structure, interacts with UNRIP/MAWD.

This Bos taurus (Bovine) protein is Phenazine biosynthesis-like domain-containing protein (PBLD).